The sequence spans 98 residues: uncharacterized protein (98 aa).

This is an uncharacterized protein from Schizosaccharomyces pombe (strain 972 / ATCC 24843) (Fission yeast).